The following is a 41-amino-acid chain: Large ribosomal subunit protein bL36 (41 aa).

The protein belongs to the bacterial ribosomal protein bL36 family.

In Methylorubrum extorquens (strain CM4 / NCIMB 13688) (Methylobacterium extorquens), this protein is Large ribosomal subunit protein bL36.